Reading from the N-terminus, the 179-residue chain is Bifunctional protein PyrR (179 aa).

Positions 100–112 match the PRPP-binding motif; that stretch reads VILVDDVLFTGRT.

The protein belongs to the purine/pyrimidine phosphoribosyltransferase family. PyrR subfamily.

The catalysed reaction is UMP + diphosphate = 5-phospho-alpha-D-ribose 1-diphosphate + uracil. Functionally, regulates the transcription of the pyrimidine nucleotide (pyr) operon in response to exogenous pyrimidines. Also displays a weak uracil phosphoribosyltransferase activity which is not physiologically significant. This Haemophilus influenzae (strain 86-028NP) protein is Bifunctional protein PyrR.